Here is a 239-residue protein sequence, read N- to C-terminus: Transcriptional activatory protein AadR (239 aa).

27–149 (ICGELGPADH…FATRELSLAQ (123 aa)) lines the a nucleoside 3',5'-cyclic phosphate pocket. Residues 158 to 231 (RSAEEKVAAF…PDGVRVLDPK (74 aa)) form the HTH crp-type domain. The H-T-H motif DNA-binding region spans 191–210 (RQDIADFLGLTIETVSRTFT).

Transcriptional activator of anaerobic gene expression. For aromatic acid degradation. Also required for the anaerobic degradation of benzoate. In Rhodopseudomonas palustris (strain ATCC BAA-98 / CGA009), this protein is Transcriptional activatory protein AadR (aadR).